The sequence spans 540 residues: Membrane protein insertase YidC (540 aa).

Residues 6-26 (NILLIALALVSFLLFQQWQVA) traverse the membrane as a helical segment. Residues 36–63 (QAQSSSTLPAPSFADELDPVPGQQQASA) are disordered. 4 helical membrane-spanning segments follow: residues 342–362 (AFIQ…TFIV), 417–437 (LGGC…YWAL), 455–475 (LSAQ…MFLI), and 496–516 (PVMF…YWLV).

It belongs to the OXA1/ALB3/YidC family. Type 1 subfamily. As to quaternary structure, interacts with the Sec translocase complex via SecD. Specifically interacts with transmembrane segments of nascent integral membrane proteins during membrane integration.

Its subcellular location is the cell inner membrane. Functionally, required for the insertion and/or proper folding and/or complex formation of integral membrane proteins into the membrane. Involved in integration of membrane proteins that insert both dependently and independently of the Sec translocase complex, as well as at least some lipoproteins. Aids folding of multispanning membrane proteins. The polypeptide is Membrane protein insertase YidC (Vibrio campbellii (strain ATCC BAA-1116)).